A 154-amino-acid chain; its full sequence is MNKIEGHVIGTDLKIGIVVSRFNDFITSKLLSGAEDTLLRHGVKADDIDVAWVPGAFEIPLIAKKMAETKKYDAVITLGTVIRGATSHYDYVCNEAAKGIAASSMSTGVPVIFGVLTTDTIEQAVERAGTKAGNKGAEAAAAAIEMANLTRSLQ.

5-amino-6-(D-ribitylamino)uracil is bound by residues Phe22, 56–58 (AFE), and 80–82 (TVI). A (2S)-2-hydroxy-3-oxobutyl phosphate-binding site is contributed by 85–86 (AT). The Proton donor role is filled by His88. Phe113 serves as a coordination point for 5-amino-6-(D-ribitylamino)uracil. Arg127 contacts (2S)-2-hydroxy-3-oxobutyl phosphate.

It belongs to the DMRL synthase family. In terms of assembly, forms an icosahedral capsid composed of 60 subunits, arranged as a dodecamer of pentamers.

The enzyme catalyses (2S)-2-hydroxy-3-oxobutyl phosphate + 5-amino-6-(D-ribitylamino)uracil = 6,7-dimethyl-8-(1-D-ribityl)lumazine + phosphate + 2 H2O + H(+). It functions in the pathway cofactor biosynthesis; riboflavin biosynthesis; riboflavin from 2-hydroxy-3-oxobutyl phosphate and 5-amino-6-(D-ribitylamino)uracil: step 1/2. Functionally, catalyzes the formation of 6,7-dimethyl-8-ribityllumazine by condensation of 5-amino-6-(D-ribitylamino)uracil with 3,4-dihydroxy-2-butanone 4-phosphate. This is the penultimate step in the biosynthesis of riboflavin. The protein is 6,7-dimethyl-8-ribityllumazine synthase of Bacillus licheniformis (strain ATCC 14580 / DSM 13 / JCM 2505 / CCUG 7422 / NBRC 12200 / NCIMB 9375 / NCTC 10341 / NRRL NRS-1264 / Gibson 46).